The sequence spans 360 residues: uncharacterized protein (360 aa).

4-22 (KVLHIGAGGFGERWCDTFL) is an NAD(+) binding site.

Functionally, could be a NAD-dependent oxidoreductase. This is an uncharacterized protein from Sinorhizobium fredii (strain NBRC 101917 / NGR234).